A 633-amino-acid chain; its full sequence is Uracil permease (633 aa).

The next 12 helical transmembrane spans lie at 143 to 163 (WWQC…FVVL), 173 to 193 (LSFP…WPVI), 197 to 217 (VMAI…VSLM), 242 to 262 (YEFM…LVPP), 268 to 288 (LFTV…IWAI), 310 to 330 (FSWA…TMVI), 350 to 370 (LVCI…VTAA), 400 to 420 (AGVF…NISA), 442 to 462 (GSLF…MATS), 465 to 485 (FTMA…VVCS), 521 to 541 (ALAA…AEVG), and 559 to 579 (YWVG…FFPV).

It belongs to the purine-cytosine permease (2.A.39) family. Glycosylated (possible); but there is not yet direct biochemical evidence for it.

Its subcellular location is the membrane. Transport of uracil. The chain is Uracil permease (FUR4) from Saccharomyces cerevisiae (strain ATCC 204508 / S288c) (Baker's yeast).